Reading from the N-terminus, the 203-residue chain is MDAGKAERRAGNGRRTDGRRHLVVAAACAAFIAAMVGVTYASVPLYAMFCALTGFGGATRVGAAPTSAPIEREITIRFDANVAPGLPWAFAPVERDVTVKVGATSLAHYTAANRSSMETHANATYNVSPPQAGAYFVKLQCFCFDEQTLAPNEKLEMPVVFYVDPAIAQDPDLKTLTDITLSYTFFPAKTPDKAAARASGTGG.

Residues 1–19 (MDAGKAERRAGNGRRTDGR) lie on the Cytoplasmic side of the membrane. The chain crosses the membrane as a helical; Signal-anchor for type II membrane protein span at residues 20–42 (RHLVVAAACAAFIAAMVGVTYAS). Over 43 to 203 (VPLYAMFCAL…AAARASGTGG (161 aa)) the chain is Periplasmic.

Belongs to the COX11/CtaG family.

The protein resides in the cell inner membrane. Its function is as follows. Exerts its effect at some terminal stage of cytochrome c oxidase synthesis, probably by being involved in the insertion of the copper B into subunit I. The polypeptide is Cytochrome c oxidase assembly protein CtaG (Xanthobacter autotrophicus (strain ATCC BAA-1158 / Py2)).